A 298-amino-acid chain; its full sequence is Tyrosine recombinase XerC (298 aa).

The Core-binding (CB) domain maps to methionine 1–methionine 84. The region spanning tyrosine 105–leucine 286 is the Tyr recombinase domain. Active-site residues include arginine 145, lysine 169, histidine 238, arginine 241, and histidine 264. Tyrosine 273 serves as the catalytic O-(3'-phospho-DNA)-tyrosine intermediate.

Belongs to the 'phage' integrase family. XerC subfamily. As to quaternary structure, forms a cyclic heterotetrameric complex composed of two molecules of XerC and two molecules of XerD.

The protein resides in the cytoplasm. Functionally, site-specific tyrosine recombinase, which acts by catalyzing the cutting and rejoining of the recombining DNA molecules. The XerC-XerD complex is essential to convert dimers of the bacterial chromosome into monomers to permit their segregation at cell division. It also contributes to the segregational stability of plasmids. In Staphylococcus aureus, this protein is Tyrosine recombinase XerC.